Reading from the N-terminus, the 807-residue chain is Hyaluronate lyase (807 aa).

Residues 1 to 40 form the signal peptide; that stretch reads MTYRIKKWQKLSTITLLMAGVITLNGGEFRSVDKHQIAVA. Active-site residues include Asn-241, His-297, and Tyr-306.

Belongs to the polysaccharide lyase 8 family.

It is found in the secreted. The enzyme catalyses [hyaluronan](n) = n 3-(4-deoxy-beta-D-gluc-4-enuronosyl)-N-acetyl-D-glucosamine + H2O. The protein is Hyaluronate lyase of Staphylococcus aureus (strain NCTC 8325 / PS 47).